A 165-amino-acid polypeptide reads, in one-letter code: SPbeta prophage-derived uncharacterized protein YorR (165 aa).

In Bacillus subtilis (strain 168), this protein is SPbeta prophage-derived uncharacterized protein YorR (yorR).